Reading from the N-terminus, the 220-residue chain is UPF0319 protein YccT (220 aa).

Residues M1 to A20 form the signal peptide.

Belongs to the UPF0319 family.

This chain is UPF0319 protein YccT, found in Shigella flexneri serotype 5b (strain 8401).